A 333-amino-acid chain; its full sequence is MSSKKKKADAEVSQTQATVEVRADVDVEELEGIGRVTGAKLKERGYYTVRDIAFASVKELAEIIGNEDRAQQIIEAARKMLGLHSFISALEVYERRKKIRRISTGVRSLDELLGGGIETRAVTEIVGEFGSGKTQLCHQLAVMVQLPEERGGLGAKAIYIDTENTFRPERIMQIAKARGLDSDQALHNIFYARAYSSDHQMILVEQAKSIIKQHNVALLVVDSVIAHFRSEFPGRENLAERQQKLNKHVADLLRLADAYDVAVVITNQVMAQPDVFFGNPLRPAGGNILAHGATYRLWLRKSKENIRIAKIFDSPYHPEGEVSFRITEEGLVD.

127-134 (GEFGSGKT) is a binding site for ATP.

The protein belongs to the eukaryotic RecA-like protein family.

Its function is as follows. Involved in DNA repair and in homologous recombination. Binds and assemble on single-stranded DNA to form a nucleoprotein filament. Hydrolyzes ATP in a ssDNA-dependent manner and promotes DNA strand exchange between homologous DNA molecules. This chain is DNA repair and recombination protein RadA, found in Pyrobaculum aerophilum (strain ATCC 51768 / DSM 7523 / JCM 9630 / CIP 104966 / NBRC 100827 / IM2).